Here is a 91-residue protein sequence, read N- to C-terminus: Small ribosomal subunit protein bS16 (91 aa).

Belongs to the bacterial ribosomal protein bS16 family.

This Latilactobacillus sakei subsp. sakei (strain 23K) (Lactobacillus sakei subsp. sakei) protein is Small ribosomal subunit protein bS16.